The following is a 214-amino-acid chain: 3-isopropylmalate dehydratase small subunit (214 aa).

It belongs to the LeuD family. LeuD type 1 subfamily. Heterodimer of LeuC and LeuD.

The catalysed reaction is (2R,3S)-3-isopropylmalate = (2S)-2-isopropylmalate. The protein operates within amino-acid biosynthesis; L-leucine biosynthesis; L-leucine from 3-methyl-2-oxobutanoate: step 2/4. Its function is as follows. Catalyzes the isomerization between 2-isopropylmalate and 3-isopropylmalate, via the formation of 2-isopropylmaleate. In Methylobacillus flagellatus (strain ATCC 51484 / DSM 6875 / VKM B-1610 / KT), this protein is 3-isopropylmalate dehydratase small subunit.